Consider the following 326-residue polypeptide: MLTLARQQQRQNIRWLLCLSVLMLLALLLSLCAGELWILPGDWFSPRGELFVWQIRLPRTLAVLLVGAALAISGAVMQALFENPLAEPGLLGVSNGAGVGLIAAVLLGQGQLPNWALGLCAIAGALIITLILLRFARRHLSTSRLLLAGVALGIICSALMTWAIYFSTSVDLRQLMYWMMGGFGGVDWRQSWLMLALIPVLLWICCQSRPMNMLALGEISARQLGLPLWFWRNVLVAATGWMVGVSVALAGAIGFIGLVIPHILRLCGLTDHRVLLPGCALAGASALLLADIVARLALAAAELPIGVVTATLGAPVFIWLLLKAGR.

A run of 9 helical transmembrane segments spans residues 19 to 39 (LSVL…LWIL), 61 to 81 (LAVL…QALF), 88 to 108 (PGLL…VLLG), 112 to 132 (LPNW…TLIL), 146 to 166 (LLAG…AIYF), 184 to 204 (GGVD…LLWI), 240 to 260 (GWMV…GLVI), 274 to 294 (VLLP…DIVA), and 302 to 322 (ELPI…WLLL).

The protein belongs to the binding-protein-dependent transport system permease family. FecCD subfamily. In terms of assembly, the complex is composed of two ATP-binding proteins (BtuD), two transmembrane proteins (BtuC) and a solute-binding protein (BtuF).

The protein localises to the cell inner membrane. Its function is as follows. Part of the ABC transporter complex BtuCDF involved in vitamin B12 import. Involved in the translocation of the substrate across the membrane. This is Vitamin B12 import system permease protein BtuC from Escherichia coli O6:K15:H31 (strain 536 / UPEC).